The sequence spans 686 residues: Eomesodermin homolog (686 aa).

Residues 27-46 are disordered; that stretch reads GGSGGSAGHLPSAAPSPQKL. Low complexity predominate over residues 34-43; the sequence is GHLPSAAPSP. Ser107 carries the phosphoserine modification. The segment at residues 276 to 456 is a DNA-binding region (T-box); sequence LWLKFHRHQT…HNPFAKGFRD (181 aa). Positions 571-686 are required for transcription activation; it reads AMAGWGGRGS…GGYYAFYTTP (116 aa). Positions 639–686 are disordered; it reads ACKRRRLSPSNSSNENSPSIKCEDINAEEYSKDTSKGMGGYYAFYTTP. The segment covering 646 to 657 has biased composition (low complexity); the sequence is SPSNSSNENSPS. Basic and acidic residues predominate over residues 659 to 673; the sequence is KCEDINAEEYSKDTS.

As to expression, expressed in CD8+ T-cells.

It localises to the nucleus. In terms of biological role, functions as a transcriptional activator playing a crucial role during development. Functions in trophoblast differentiation and later in gastrulation, regulating both mesoderm delamination and endoderm specification. Plays a role in brain development being required for the specification and the proliferation of the intermediate progenitor cells and their progeny in the cerebral cortex. Required for differentiation and migration of unipolar dendritic brush cells. Also involved in the differentiation of CD8+ T-cells during immune response regulating the expression of lytic effector genes. The polypeptide is Eomesodermin homolog (EOMES) (Homo sapiens (Human)).